A 252-amino-acid chain; its full sequence is Ribonuclease 3 (252 aa).

Residues 3-125 (LATLETRLDH…IFGAAFLDGG (123 aa)) enclose the RNase III domain. Glu-38 is a Mg(2+) binding site. Residue Asp-42 is part of the active site. Mg(2+)-binding residues include Asp-111 and Glu-114. The active site involves Glu-114. In terms of domain architecture, DRBM spans 152 to 222 (DAKTLLQEFL…AKLALEAAQA (71 aa)).

It belongs to the ribonuclease III family. In terms of assembly, homodimer. The cofactor is Mg(2+).

It is found in the cytoplasm. It carries out the reaction Endonucleolytic cleavage to 5'-phosphomonoester.. Its function is as follows. Digests double-stranded RNA. Involved in the processing of primary rRNA transcript to yield the immediate precursors to the large and small rRNAs (23S and 16S). Processes some mRNAs, and tRNAs when they are encoded in the rRNA operon. Processes pre-crRNA and tracrRNA of type II CRISPR loci if present in the organism. The protein is Ribonuclease 3 of Bordetella petrii (strain ATCC BAA-461 / DSM 12804 / CCUG 43448).